Consider the following 2544-residue polypeptide: DNA polymerase theta (2544 aa).

A compositionally biased stretch (basic residues) spans 1–13 (MSLPRRSRKRRRS). The disordered stretch occupies residues 1-57 (MSLPRRSRKRRRSSSGSDTFSGDGDSFVSPQLRCGPVLSPPPGLGRGRRLTGTGTNK). Residues 14-29 (SSGSDTFSGDGDSFVS) are compositionally biased toward low complexity. Residues Gln-95 and 114-121 (APTSAGKT) each bind ATP. Residues 101 to 285 (LGHVLEGKNL…WLNAELYHTD (185 aa)) enclose the Helicase ATP-binding domain. Residues 101 to 551 (LGHVLEGKNL…STSQDMQTYA (451 aa)) form a helicase activity region. The short motif at 215-218 (DELH) is the DEAH box element. The 232-residue stretch at 320–551 (GDEDHIVSLC…STSQDMQTYA (232 aa)) folds into the Helicase C-terminal domain. Positions 844 to 890 (DEEEEAAEERRSMRTIWVTGKGLSAREAAALIVEEAKMILQQDLIEM) are interaction with RAD51. Positions 896–955 (PKSPLSSSTHSRTSTSEVKEHTFKSQTKSSHKRLASMGRNSIRASGSNDKPSPDAERGID) are disordered. Over residues 898–911 (SPLSSSTHSRTSTS) the composition is skewed to low complexity. Positions 933-945 (GRNSIRASGSNDK) are enriched in polar residues. Positions 946–955 (PSPDAERGID) are enriched in basic and acidic residues. Lys-983 is modified (N6-acetyllysine). Residues 1022–1034 (LSFSSEQVNNTLP) are compositionally biased toward polar residues. 2 disordered regions span residues 1022-1058 (LSFS…GMHR) and 1128-1167 (VGHP…ESQL). Residues 1128 to 1139 (VGHPAAGSSPAA) show a composition bias toward low complexity. Residues 1140-1155 (ARDRRGLAARETEKGN) show a composition bias toward basic and acidic residues. Ser-1265 bears the Phosphoserine mark. Disordered regions lie at residues 1266–1288 (GVQG…SNPA) and 1331–1353 (QNKC…DHVD). Ser-1438, Ser-1442, Ser-1444, and Ser-1449 each carry phosphoserine. A disordered region spans residues 1478–1501 (FSNPPHPQEDPVMTPTVSEPQGTQ). Residues 1492–1501 (PTVSEPQGTQ) show a composition bias toward polar residues. 4 positions are modified to phosphoserine: Ser-1511, Ser-1519, Ser-1585, and Ser-1592. The interval 1557–1591 (ECPQGKLVRGDQNEGSPKPKLTETNQDNSFTWSGA) is disordered. A compositionally biased stretch (polar residues) spans 1578–1591 (TETNQDNSFTWSGA). 2 stretches are compositionally biased toward basic and acidic residues: residues 1606–1616 (VSSPRENEKPK) and 1628–1638 (NSKESHEREEI). Residues 1606 to 1697 (VSSPRENEKP…GLIPPTPVPA (92 aa)) form a disordered region. The span at 1641-1652 (DLGTVQRTSVFP) shows a compositional bias: polar residues. Over residues 1656 to 1667 (VKNRTEGLESKA) the composition is skewed to basic and acidic residues. Residue Thr-1710 is modified to Phosphothreonine. A DNA polymerase activity region spans residues 2052-2538 (AECESQKHVM…KVKIGASWGE (487 aa)). 2 loop regions span residues 2097-2132 (KLPP…GRQF) and 2212-2276 (EIKM…VPFP). A compositionally biased stretch (polar residues) spans 2104 to 2117 (MKTQGSKKTLGSTR). The segment at 2104–2124 (MKTQGSKKTLGSTRRGNESGR) is disordered. Catalysis depends on Asp-2284, which acts as the For DNA polymerase activity. Mg(2+)-binding residues include Asp-2284 and Tyr-2285. The interval 2445-2489 (QLETFRSTFKSHGHRESMLQNDRTGLLPKRKLKGMFCPMRGGFFI) is loop 3. Asp-2494 is a Mg(2+) binding site.

Belongs to the DNA polymerase type-A family. In terms of assembly, homomultimer; forms homodimers and homotetramers. Interacts with RAD51. Interacts with ORC2 and ORC4. Interacts with RHNO1; interaction takes place during mitosis and promotes POLQ recruitment to DNA damage sites. Interacts (when phosphorylated) with TOPBP1 (via BRCT domains 7 and 8); promoting POLQ recruitment to DNA damage sites. It depends on Mg(2+) as a cofactor. In terms of processing, phosphorylated by PLK1; promoting interaction with TOPBP1 and recruitment to DNA damage sites.

The protein resides in the nucleus. It is found in the chromosome. The enzyme catalyses DNA(n) + a 2'-deoxyribonucleoside 5'-triphosphate = DNA(n+1) + diphosphate. It catalyses the reaction ATP + H2O = ADP + phosphate + H(+). Low-fidelity DNA polymerase with a helicase activity that promotes microhomology-mediated end-joining (MMEJ), an alternative non-homologous end-joining (NHEJ) machinery required to repair double-strand breaks in DNA during mitosis. MMEJ is an error-prone repair pathway that produces deletions of sequences from the strand being repaired and promotes genomic rearrangements, such as telomere fusions, some of them leading to cellular transformation. MMEJ is required during mitosis to repair persistent double-strand breaks that originate in S-phase. Although error-prone, MMEJ protects against chromosomal instability and tumorigenesis. The polymerase acts by binding directly the 2 ends of resected double-strand breaks, allowing microhomologous sequences in the overhangs to form base pairs. It then extends each strand from the base-paired region using the opposing overhang as a template. Requires partially resected DNA containing 2 to 6 base pairs of microhomology to perform MMEJ. The polymerase lacks proofreading activity and is highly promiscuous: unlike most polymerases, promotes extension of ssDNA and partial ssDNA (pssDNA) substrates. When the ends of a break do not contain terminal microhomology must identify embedded complementary sequences through a scanning step. Also acts as a DNA helicase, promoting dissociation of the replication protein A complex (RPA/RP-A), composed of RPA1, RPA2 and RPA3, from resected double-strand breaks to allow their annealing and subsequent joining by MMEJ. Removal of RPA/RP-A complex proteins prevents RAD51 accumulation at resected ends, thereby inhibiting homology-recombination repair (HR) pathway. Also shows RNA-directed DNA polymerase activity to mediate DNA repair in vitro; however this activity needs additional evidence in vivo. May also have lyase activity. Involved in somatic hypermutation of immunoglobulin genes, a process that requires the activity of DNA polymerases to ultimately introduce mutations at both A/T and C/G base pairs. However, POLQ does not play a major role in somatic hypermutation. POLQ-mediated end joining activity is involved in random integration of exogenous DNA hampers. This chain is DNA polymerase theta, found in Mus musculus (Mouse).